A 210-amino-acid chain; its full sequence is Large ribosomal subunit protein uL3 (210 aa).

The tract at residues 121-150 (GGIKRHGFHRGPMAHGSKYHRRPGSLGAKG) is disordered.

This sequence belongs to the universal ribosomal protein uL3 family. As to quaternary structure, part of the 50S ribosomal subunit. Forms a cluster with proteins L14 and L19.

Its function is as follows. One of the primary rRNA binding proteins, it binds directly near the 3'-end of the 23S rRNA, where it nucleates assembly of the 50S subunit. The sequence is that of Large ribosomal subunit protein uL3 from Pelotomaculum thermopropionicum (strain DSM 13744 / JCM 10971 / SI).